Here is a 448-residue protein sequence, read N- to C-terminus: Protein W (448 aa).

2 disordered regions span residues 26–104 (KTYG…DPDD) and 193–406 (FVPK…KKGA). Composition is skewed to polar residues over residues 28 to 37 (YGRSSIQQPS) and 77 to 96 (DLSS…SNTR). A compositionally biased stretch (acidic residues) spans 240–252 (SDDEDENQLEYED). Ser-257 is modified (phosphoserine; by host). Positions 296–317 (FPEKEETPDVRRKDSLMQDSCK) are enriched in basic and acidic residues. Ser-350 carries the post-translational modification Phosphoserine; by host.

This Hendra virus (isolate Horse/Autralia/Hendra/1994) protein is Protein W (P/V/C).